A 203-amino-acid polypeptide reads, in one-letter code: Orotate phosphoribosyltransferase (203 aa).

Residues Arg94, Lys98, His100, and 120–128 (EDLISTGGS) contribute to the 5-phospho-alpha-D-ribose 1-diphosphate site. Ser124 contacts orotate.

This sequence belongs to the purine/pyrimidine phosphoribosyltransferase family. PyrE subfamily. As to quaternary structure, homodimer. It depends on Mg(2+) as a cofactor.

It carries out the reaction orotidine 5'-phosphate + diphosphate = orotate + 5-phospho-alpha-D-ribose 1-diphosphate. It participates in pyrimidine metabolism; UMP biosynthesis via de novo pathway; UMP from orotate: step 1/2. Catalyzes the transfer of a ribosyl phosphate group from 5-phosphoribose 1-diphosphate to orotate, leading to the formation of orotidine monophosphate (OMP). This chain is Orotate phosphoribosyltransferase, found in Staphylococcus aureus (strain MSSA476).